Here is a 442-residue protein sequence, read N- to C-terminus: Hydroxycinnamoyltransferase 2 (442 aa).

Active-site proton acceptor residues include His159 and Asp389.

It belongs to the plant acyltransferase family. Expressed in roots and leaves. Expressed at low levels in stems and seeds.

Hydroxycinnamoyl transferase that catalyzes the transfer of an acyl from p-coumaryol-CoA to various acyl acceptors. Can use feruloyl-CoA and caffeoyl-CoA as acyl donors. This Oryza sativa subsp. japonica (Rice) protein is Hydroxycinnamoyltransferase 2.